A 462-amino-acid chain; its full sequence is UDP-N-acetylmuramate--L-alanine ligase (462 aa).

117-123 (GTHGKTT) is an ATP binding site.

Belongs to the MurCDEF family.

It is found in the cytoplasm. The enzyme catalyses UDP-N-acetyl-alpha-D-muramate + L-alanine + ATP = UDP-N-acetyl-alpha-D-muramoyl-L-alanine + ADP + phosphate + H(+). It participates in cell wall biogenesis; peptidoglycan biosynthesis. Its function is as follows. Cell wall formation. The sequence is that of UDP-N-acetylmuramate--L-alanine ligase from Streptomyces coelicolor (strain ATCC BAA-471 / A3(2) / M145).